Here is a 153-residue protein sequence, read N- to C-terminus: UPF0266 membrane protein YPTB1631 (153 aa).

3 consecutive transmembrane segments (helical) span residues 6–26, 45–65, and 67–87; these read LVLV…EFIM, LDCM…VMAH, and APLT…ISYI.

This sequence belongs to the UPF0266 family.

The protein localises to the cell inner membrane. The polypeptide is UPF0266 membrane protein YPTB1631 (Yersinia pseudotuberculosis serotype I (strain IP32953)).